A 492-amino-acid polypeptide reads, in one-letter code: MTTQHSKTDVILIGGGIMSATLGTLLKELSPEKNIKVFEKLAQPGEESSNVWNNAGTGHSALCELNYTKEGKDGTVDCSKAIKINEQYQISKQFWAYLVKTGQLDNPDRFIQAVPHMSFVIGEDNVAFIKSRVATLKKNVLFEKMKLSQDEEEMKSWVPLMIEGRKSDEPIALTYDETGTDVNFGALTAKLFDNLEQRGVEIQYKQNVLDIKKQKSGAWLVKVKDLETNETTTYESDFVFIGAGGASLPLLQKTGIKQSKHIGGFPVSGLFLRCTNQEVIDRHHAKVYGKAAVGAPPMSVPHLDTRFVDGKRSLLFGPFAGFSPKFLKTGSHMDLIKSVKPNNIVTMLSAGIKEMSLTKYLVSQLMLSNDERMDDLRVFFPNAKNEDWEVITAGQRVQVIKDTEDSKGNLQFGTEVITSDDGTLAALLGASPGASTAVDIMFDVLQRCYRDEFKGWEPKIKEMVPSFGYRLTDHEDLYHKINEEVTKYLQVK.

Belongs to the MQO family. FAD is required as a cofactor.

The enzyme catalyses (S)-malate + a quinone = a quinol + oxaloacetate. It participates in carbohydrate metabolism; tricarboxylic acid cycle; oxaloacetate from (S)-malate (quinone route): step 1/1. In Staphylococcus aureus (strain MRSA252), this protein is Probable malate:quinone oxidoreductase 1.